The primary structure comprises 383 residues: Protein salvador homolog 1 (383 aa).

A phosphoserine mark is found at Ser-94 and Ser-136. 2 consecutive WW domains span residues 199–232 (LPLP…HPLE) and 234–267 (EGLP…HPCA). Thr-210 is subject to Phosphothreonine. In terms of domain architecture, SARAH spans 321–368 (ILKWELFQLADLDTYQGMLKLLFMKELEQIVKMYEAYRQALLTELENR). The stretch at 344–373 (MKELEQIVKMYEAYRQALLTELENRKQRQQ) forms a coiled coil.

As to quaternary structure, homodimer. Stabilized through interaction with STK3/MST2 or STK4/MST1. Interacts (via SARAH domain) with isoform 1 of NEK2. Interacts with ESR1 only in the presence of STK3/MST2. Interacts with WTIP and AJUBA. In terms of processing, phosphorylated by STK3/MST2 and STK4/MST1. Phosphorylation is not required for SAV1 stability and may increase the number of protein binding sites on the scaffold molecule. Ubiquitously expressed in adult tissues with highest expression in the pancreas, aorta and interventricular septum and lowest expression in skeletal muscle. Expression was higher in fetal than in the adult heart. Expressed in various cell lines.

It localises to the nucleus. The protein localises to the cytoplasm. Regulator of STK3/MST2 and STK4/MST1 in the Hippo signaling pathway which plays a pivotal role in organ size control and tumor suppression by restricting proliferation and promoting apoptosis. The core of this pathway is composed of a kinase cascade wherein STK3/MST2 and STK4/MST1, in complex with its regulatory protein SAV1, phosphorylates and activates LATS1/2 in complex with its regulatory protein MOB1, which in turn phosphorylates and inactivates YAP1 oncoprotein and WWTR1/TAZ. Phosphorylation of YAP1 by LATS1/2 inhibits its translocation into the nucleus to regulate cellular genes important for cell proliferation, cell death, and cell migration. SAV1 is required for STK3/MST2 and STK4/MST1 activation and promotes cell-cycle exit and terminal differentiation in developing epithelial tissues. Plays a role in centrosome disjunction by regulating the localization of NEK2 to centrosomes, and its ability to phosphorylate CROCC and CEP250. In conjunction with STK3/MST2, activates the transcriptional activity of ESR1 through the modulation of its phosphorylation. This is Protein salvador homolog 1 from Homo sapiens (Human).